Here is a 105-residue protein sequence, read N- to C-terminus: Met repressor (105 aa).

The protein belongs to the MetJ family. Homodimer.

Its subcellular location is the cytoplasm. Its function is as follows. This regulatory protein, when combined with SAM (S-adenosylmethionine) represses the expression of the methionine regulon and of enzymes involved in SAM synthesis. The polypeptide is Met repressor (Pasteurella multocida (strain Pm70)).